The chain runs to 557 residues: Trigger factor (557 aa).

The 87-residue stretch at 169–255 folds into the PPIase FKBP-type domain; that stretch reads GDVVVIDFQA…LKEIKTKELP (87 aa). The disordered stretch occupies residues 438 to 557; sequence WVDSEGNPTE…KAGKKSKKDK (120 aa). Residues 455–466 show a composition bias toward basic and acidic residues; it reads SEGEDRQERSES.

The protein belongs to the FKBP-type PPIase family. Tig subfamily.

Its subcellular location is the cytoplasm. It catalyses the reaction [protein]-peptidylproline (omega=180) = [protein]-peptidylproline (omega=0). In terms of biological role, involved in protein export. Acts as a chaperone by maintaining the newly synthesized protein in an open conformation. Functions as a peptidyl-prolyl cis-trans isomerase. This chain is Trigger factor, found in Synechococcus sp. (strain JA-3-3Ab) (Cyanobacteria bacterium Yellowstone A-Prime).